The primary structure comprises 1171 residues: Pyruvate-flavodoxin oxidoreductase (1171 aa).

4Fe-4S ferredoxin-type domains lie at 682–711 and 736–767; these read EVPV…PALL and YHLA…MQSL. [4Fe-4S] cluster is bound by residues Cys-691, Cys-694, Cys-697, Cys-701, Cys-745, Cys-748, Cys-751, Cys-755, Cys-811, Cys-814, Cys-839, and Cys-1072.

It belongs to the pyruvate:ferredoxin/flavodoxin oxidoreductase family. The cofactor is [4Fe-4S] cluster.

The catalysed reaction is oxidized [flavodoxin] + pyruvate + CoA + 2 H(+) = reduced [flavodoxin] + acetyl-CoA + CO2. Functionally, oxidoreductase required for the transfer of electrons from pyruvate to flavodoxin, which reduces nitrogenase. The sequence is that of Pyruvate-flavodoxin oxidoreductase (nifJ) from Klebsiella pneumoniae.